Reading from the N-terminus, the 616-residue chain is Dihydroxy-acid dehydratase (616 aa).

Residue Asp-81 coordinates Mg(2+). Cys-122 contributes to the [2Fe-2S] cluster binding site. Asp-123 and Lys-124 together coordinate Mg(2+). The residue at position 124 (Lys-124) is an N6-carboxylysine. Cys-195 contributes to the [2Fe-2S] cluster binding site. Glu-491 lines the Mg(2+) pocket. Ser-517 functions as the Proton acceptor in the catalytic mechanism.

Belongs to the IlvD/Edd family. In terms of assembly, homodimer. It depends on [2Fe-2S] cluster as a cofactor. Mg(2+) is required as a cofactor.

The enzyme catalyses (2R)-2,3-dihydroxy-3-methylbutanoate = 3-methyl-2-oxobutanoate + H2O. The catalysed reaction is (2R,3R)-2,3-dihydroxy-3-methylpentanoate = (S)-3-methyl-2-oxopentanoate + H2O. Its pathway is amino-acid biosynthesis; L-isoleucine biosynthesis; L-isoleucine from 2-oxobutanoate: step 3/4. It participates in amino-acid biosynthesis; L-valine biosynthesis; L-valine from pyruvate: step 3/4. Functions in the biosynthesis of branched-chain amino acids. Catalyzes the dehydration of (2R,3R)-2,3-dihydroxy-3-methylpentanoate (2,3-dihydroxy-3-methylvalerate) into 2-oxo-3-methylpentanoate (2-oxo-3-methylvalerate) and of (2R)-2,3-dihydroxy-3-methylbutanoate (2,3-dihydroxyisovalerate) into 2-oxo-3-methylbutanoate (2-oxoisovalerate), the penultimate precursor to L-isoleucine and L-valine, respectively. This chain is Dihydroxy-acid dehydratase, found in Photorhabdus laumondii subsp. laumondii (strain DSM 15139 / CIP 105565 / TT01) (Photorhabdus luminescens subsp. laumondii).